Consider the following 348-residue polypeptide: Dihydroorotase (348 aa).

2 residues coordinate Zn(2+): His-17 and His-19. Residues His-19–Arg-21 and Asn-45 contribute to the substrate site. Zn(2+) is bound by residues Lys-103, His-140, and His-178. Lys-103 carries the post-translational modification N6-carboxylysine. His-140 contacts substrate. Residue Leu-223 coordinates substrate. Asp-251 provides a ligand contact to Zn(2+). The active site involves Asp-251. Residues His-255 and Ala-267 each coordinate substrate.

The protein belongs to the metallo-dependent hydrolases superfamily. DHOase family. Class II DHOase subfamily. In terms of assembly, homodimer. It depends on Zn(2+) as a cofactor.

The enzyme catalyses (S)-dihydroorotate + H2O = N-carbamoyl-L-aspartate + H(+). It participates in pyrimidine metabolism; UMP biosynthesis via de novo pathway; (S)-dihydroorotate from bicarbonate: step 3/3. Catalyzes the reversible cyclization of carbamoyl aspartate to dihydroorotate. The sequence is that of Dihydroorotase from Salmonella typhi.